The sequence spans 311 residues: Glycine--tRNA ligase alpha subunit (311 aa).

The protein belongs to the class-II aminoacyl-tRNA synthetase family. In terms of assembly, tetramer of two alpha and two beta subunits.

The protein localises to the cytoplasm. It carries out the reaction tRNA(Gly) + glycine + ATP = glycyl-tRNA(Gly) + AMP + diphosphate. The polypeptide is Glycine--tRNA ligase alpha subunit (Bradyrhizobium diazoefficiens (strain JCM 10833 / BCRC 13528 / IAM 13628 / NBRC 14792 / USDA 110)).